A 393-amino-acid chain; its full sequence is Cyclic GMP-AMP synthase-like receptor 1 (393 aa).

3 residues coordinate Mg(2+): Glu-89, Asp-91, and Asp-205. Residue 89–91 (EFD) participates in ATP binding. Residues Asp-205 and 251-258 (RASFYEAE) each bind GTP. ATP contacts are provided by residues 255–258 (YEAE), Lys-276, and 289–293 (SYHIK).

The protein belongs to the mab-21 family. Requires Mg(2+) as cofactor. It depends on Mn(2+) as a cofactor.

It catalyses the reaction GTP + ATP = 3',2'-cGAMP + 2 diphosphate. The enzyme catalyses GTP + ATP = pppA(2'-5')pG + diphosphate. The catalysed reaction is pppA(2'-5')pG = 3',2'-cGAMP + diphosphate. With respect to regulation, the enzyme activity is specifically activated by double-stranded RNA (dsRNA). Recognizes long dsRNA (&gt;30 bp) with no preference for 5' RNA phosphorylation. Its function is as follows. Nucleotidyltransferase that catalyzes the formation of cyclic GMP-AMP (3',2'-cGAMP) from ATP and GTP and plays a key role in innate immunity. Synthesizes 3',2'-cGAMP in a two-step reaction through production of the linear intermediate pppA(2'-5')pG. Acts as a key sensor of double-stranded RNA (dsRNA), the presence of dsRNA in the cytoplasm being a danger signal that triggers the immune responses. Directly binds dsRNA longer than 35 bp, activating the nucleotidyltransferase activity, leading to synthesis of 3',2'-cGAMP, a second messenger that binds to and activates Sting, thereby triggering the antiviral immune response via activation of the NF-kappa-B transcription factor Rel (Relish). The polypeptide is Cyclic GMP-AMP synthase-like receptor 1 (Drosophila simulans (Fruit fly)).